Here is a 214-residue protein sequence, read N- to C-terminus: Outer-membrane lipoprotein LolB (214 aa).

An N-terminal signal peptide occupies residues Met1 to Gly25. The N-palmitoyl cysteine moiety is linked to residue Cys26. Cys26 carries the S-diacylglycerol cysteine lipid modification.

The protein belongs to the LolB family. Monomer.

Its subcellular location is the cell outer membrane. Plays a critical role in the incorporation of lipoproteins in the outer membrane after they are released by the LolA protein. This Shewanella oneidensis (strain ATCC 700550 / JCM 31522 / CIP 106686 / LMG 19005 / NCIMB 14063 / MR-1) protein is Outer-membrane lipoprotein LolB.